Consider the following 564-residue polypeptide: Carbamoyl phosphate synthase large chain, N-terminal section (564 aa).

The carboxyphosphate synthetic domain stretch occupies residues 1–399; that stretch reads MPETPNKVLI…ALQKAIRSLE (399 aa). ATP contacts are provided by Arg127, Arg167, Gly173, Gly174, Glu206, Val208, Glu213, Gly239, Val240, His241, Gln282, and Glu296. The ATP-grasp domain occupies 131 to 325; sequence RAFMKKIGEP…IARIAAKIAI (195 aa). 3 residues coordinate Mg(2+): Gln282, Glu296, and Asn298. The Mn(2+) site is built by Gln282, Glu296, and Asn298. The segment at 400–560 is oligomerization domain; sequence IGEPGLGPSP…YSTYEEECEA (161 aa).

It belongs to the CarB family. In terms of assembly, composed of two chains; the small (or glutamine) chain promotes the hydrolysis of glutamine to ammonia, which is used by the large (or ammonia) chain to synthesize carbamoyl phosphate. Tetramer of heterodimers (alpha,beta)4. Requires Mg(2+) as cofactor. The cofactor is Mn(2+).

The enzyme catalyses hydrogencarbonate + L-glutamine + 2 ATP + H2O = carbamoyl phosphate + L-glutamate + 2 ADP + phosphate + 2 H(+). It catalyses the reaction hydrogencarbonate + NH4(+) + 2 ATP = carbamoyl phosphate + 2 ADP + phosphate + 2 H(+). Its pathway is amino-acid biosynthesis; L-arginine biosynthesis; carbamoyl phosphate from bicarbonate: step 1/1. The protein operates within pyrimidine metabolism; UMP biosynthesis via de novo pathway; (S)-dihydroorotate from bicarbonate: step 1/3. Its function is as follows. Large subunit of the glutamine-dependent carbamoyl phosphate synthetase (CPSase). CPSase catalyzes the formation of carbamoyl phosphate from the ammonia moiety of glutamine, carbonate, and phosphate donated by ATP, constituting the first step of 2 biosynthetic pathways, one leading to arginine and/or urea and the other to pyrimidine nucleotides. The large subunit (synthetase) binds the substrates ammonia (free or transferred from glutamine from the small subunit), hydrogencarbonate and ATP and carries out an ATP-coupled ligase reaction, activating hydrogencarbonate by forming carboxy phosphate which reacts with ammonia to form carbamoyl phosphate. The polypeptide is Carbamoyl phosphate synthase large chain, N-terminal section (carB1) (Methanopyrus kandleri (strain AV19 / DSM 6324 / JCM 9639 / NBRC 100938)).